A 362-amino-acid chain; its full sequence is Putative lipoprotein YdaJ (362 aa).

The signal sequence occupies residues 1–20 (MRHVLIAVILFFLSIGLSAG). Cys21 carries N-palmitoyl cysteine lipidation. Residue Cys21 is the site of S-diacylglycerol cysteine attachment.

The protein resides in the cell membrane. The polypeptide is Putative lipoprotein YdaJ (ydaJ) (Bacillus subtilis (strain 168)).